A 130-amino-acid polypeptide reads, in one-letter code: ER membrane protein complex subunit 5 (130 aa).

At 1 to 3 the chain is on the cytoplasmic side; that stretch reads MAS. The helical transmembrane segment at 4–22 threads the bilayer; the sequence is SFWKGVVGIGLFALAHAAF. Topologically, residues 23–43 are lumenal; the sequence is SAAQHRSYMRLTEKENETLPI. The chain crosses the membrane as a helical span at residues 44 to 63; that stretch reads DIVLQTLLSFVITCYGIVHI. Topologically, residues 64–130 are cytoplasmic; it reads SGEFKDMDAS…LRLRKLENFH (67 aa).

This sequence belongs to the membrane magnesium transporter (TC 1.A.67) family. In terms of assembly, component of the ER membrane protein complex (EMC).

The protein resides in the endoplasmic reticulum membrane. Its subcellular location is the golgi apparatus membrane. The protein localises to the early endosome membrane. Its function is as follows. Part of the endoplasmic reticulum membrane protein complex (EMC) that enables the energy-independent insertion into endoplasmic reticulum membranes of newly synthesized membrane proteins. Preferentially accommodates proteins with transmembrane domains that are weakly hydrophobic or contain destabilizing features such as charged and aromatic residues. Involved in the cotranslational insertion of multi-pass membrane proteins in which stop-transfer membrane-anchor sequences become ER membrane spanning helices. It is also required for the post-translational insertion of tail-anchored/TA proteins in endoplasmic reticulum membranes. By mediating the proper cotranslational insertion of N-terminal transmembrane domains in an N-exo topology, with translocated N-terminus in the lumen of the ER, controls the topology of multi-pass membrane proteins like the G protein-coupled receptors. By regulating the insertion of various proteins in membranes, it is indirectly involved in many cellular processes. May be involved in Mg(2+) transport. The sequence is that of ER membrane protein complex subunit 5 from Danio rerio (Zebrafish).